Reading from the N-terminus, the 1349-residue chain is Protein strawberry notch homolog 2 (1349 aa).

Disordered stretches follow at residues 170 to 212 (YQSH…QHPD), 609 to 633 (STRR…PKAS), and 1319 to 1349 (PTET…FPNS). A compositionally biased stretch (acidic residues) spans 177 to 188 (EEEEGEEEEETE). Over residues 609 to 631 (STRRRRDRGGGKRKRRPRGRGPK) the composition is skewed to basic residues.

The protein belongs to the SBNO family. Interacts with TAL1; this interaction inhibits TAL1 occupancy of the DCSTAMP promoter, leading to the activation of the DCSTAMP promoter by the transcription factor MITF. Expressed in the spleen and bone marrow, and to a lesser extent in the kidney, liver, brain, skin, heart and muscle. Expressed predominantly in osteoclasts, and to a lesser extent in T-cells, B-cells and osteoblasts. Expressed in macrophages.

Functionally, acts as a transcriptional coregulator, that can have both coactivator and corepressor functions. Inhibits the DCSTAMP-repressive activity of TAL1, hence enhancing the access of the transcription factor MITF to the DC-STAMP promoter in osteoclast. Plays a role in bone homeostasis; required as a positive regulator in TNFSF11//RANKL-mediated osteoclast fusion via a DCSTAMP-dependent pathway. May also be required in the regulation of osteoblast differentiation. Involved in the transcriptional corepression of NF-kappaB in macrophages. Plays a role as a regulator in the pro-inflammatory cascade. The sequence is that of Protein strawberry notch homolog 2 (Sbno2) from Mus musculus (Mouse).